A 252-amino-acid polypeptide reads, in one-letter code: Probable transcriptional regulatory protein Ava_1228 (252 aa).

The protein belongs to the TACO1 family.

The protein localises to the cytoplasm. This is Probable transcriptional regulatory protein Ava_1228 from Trichormus variabilis (strain ATCC 29413 / PCC 7937) (Anabaena variabilis).